Here is a 294-residue protein sequence, read N- to C-terminus: ATP synthase gamma chain (294 aa).

This sequence belongs to the ATPase gamma chain family. F-type ATPases have 2 components, CF(1) - the catalytic core - and CF(0) - the membrane proton channel. CF(1) has five subunits: alpha(3), beta(3), gamma(1), delta(1), epsilon(1). CF(0) has three main subunits: a, b and c.

The protein localises to the cell inner membrane. Functionally, produces ATP from ADP in the presence of a proton gradient across the membrane. The gamma chain is believed to be important in regulating ATPase activity and the flow of protons through the CF(0) complex. The polypeptide is ATP synthase gamma chain (Rhizobium rhizogenes (strain K84 / ATCC BAA-868) (Agrobacterium radiobacter)).